We begin with the raw amino-acid sequence, 121 residues long: Large ribosomal subunit protein bL12 (121 aa).

Belongs to the bacterial ribosomal protein bL12 family. As to quaternary structure, homodimer. Part of the ribosomal stalk of the 50S ribosomal subunit. Forms a multimeric L10(L12)X complex, where L10 forms an elongated spine to which 2 to 4 L12 dimers bind in a sequential fashion. Binds GTP-bound translation factors.

Its function is as follows. Forms part of the ribosomal stalk which helps the ribosome interact with GTP-bound translation factors. Is thus essential for accurate translation. This Xanthomonas campestris pv. campestris (strain B100) protein is Large ribosomal subunit protein bL12.